The chain runs to 250 residues: 23S rRNA (guanine(2535)-N(1))-methyltransferase (250 aa).

The catalysed reaction is guanosine(2535) in 23S rRNA + S-adenosyl-L-methionine = N(1)-methylguanosine(2535) in 23S rRNA + S-adenosyl-L-homocysteine + H(+). Specifically methylates the guanine-2535 in 23S ribosomal RNA. Confers resistance to antibiotic avilamycin, an orthosomycin antibiotic. In Streptomyces viridochromogenes, this protein is 23S rRNA (guanine(2535)-N(1))-methyltransferase (aviRa).